Reading from the N-terminus, the 100-residue chain is Nucleoid-associated protein Rcas_2292 (100 aa).

Belongs to the YbaB/EbfC family. In terms of assembly, homodimer.

Its subcellular location is the cytoplasm. It is found in the nucleoid. Binds to DNA and alters its conformation. May be involved in regulation of gene expression, nucleoid organization and DNA protection. This Roseiflexus castenholzii (strain DSM 13941 / HLO8) protein is Nucleoid-associated protein Rcas_2292.